A 757-amino-acid chain; its full sequence is Receptor protein kinase-like protein At4g34220 (757 aa).

A signal peptide spans 1-26 (MTSNRSNLLFSLVLFHFLFVPTQLQA). 7 LRR repeats span residues 104–126 (YLRILDLSSNFFNGSLPDSVFNA), 128–150 (ELQSISLGSNNLSGDLPKSVNSV), 152–174 (NLQLLNLSANAFTGEIPLNISLL), 176–198 (NLTVVSLSKNTFSGDIPSGFEAA), 199–219 (QILDLSSNLLNGSLPKDLGGK), 220–242 (SLHYLNLSHNKVLGEISPNFAEK), and 245–267 (ANATVDLSFNNLTGPIPSSLSLL). A helical transmembrane segment spans residues 339–359 (IAAITVADIVGLAFIGLLVLY). The 283-residue stretch at 471-753 (KASAYILGTT…KELVQVLEKI (283 aa)) folds into the Protein kinase domain. Ser-473 carries the post-translational modification Phosphoserine. Thr-494 is modified (phosphothreonine). Ser-553 is modified (phosphoserine). The disordered stretch occupies residues 633–654 (ARESHTTGPTSSSPYQPPEWST). Phosphothreonine occurs at positions 638 and 639. Positions 638–654 (TTGPTSSSPYQPPEWST) are enriched in polar residues.

Belongs to the protein kinase superfamily.

It is found in the membrane. This Arabidopsis thaliana (Mouse-ear cress) protein is Receptor protein kinase-like protein At4g34220.